Reading from the N-terminus, the 1390-residue chain is DNA-directed RNA polymerase subunit beta (1390 aa).

Belongs to the RNA polymerase beta chain family. The RNAP catalytic core consists of 2 alpha, 1 beta, 1 beta' and 1 omega subunit. When a sigma factor is associated with the core the holoenzyme is formed, which can initiate transcription.

It catalyses the reaction RNA(n) + a ribonucleoside 5'-triphosphate = RNA(n+1) + diphosphate. Its function is as follows. DNA-dependent RNA polymerase catalyzes the transcription of DNA into RNA using the four ribonucleoside triphosphates as substrates. This is DNA-directed RNA polymerase subunit beta from Gluconobacter oxydans (strain 621H) (Gluconobacter suboxydans).